A 142-amino-acid polypeptide reads, in one-letter code: Small heat shock protein IbpB (142 aa).

The sHSP domain maps to 26-137; it reads SGESQSFPPY…PPQRIAINER (112 aa).

Belongs to the small heat shock protein (HSP20) family. Homodimer. Forms homomultimers of about 100-150 subunits at optimal growth temperatures. Conformation changes to oligomers at high temperatures or high ionic concentrations. The decrease in size of the multimers is accompanied by an increase in chaperone activity.

It localises to the cytoplasm. In terms of biological role, associates with aggregated proteins, together with IbpA, to stabilize and protect them from irreversible denaturation and extensive proteolysis during heat shock and oxidative stress. Aggregated proteins bound to the IbpAB complex are more efficiently refolded and reactivated by the ATP-dependent chaperone systems ClpB and DnaK/DnaJ/GrpE. Its activity is ATP-independent. The polypeptide is Small heat shock protein IbpB (Salmonella typhi).